A 180-amino-acid chain; its full sequence is Ribulose bisphosphate carboxylase small subunit, chloroplastic 2 (180 aa).

The N-terminal 56 residues, 1 to 56 (MASSVMSSAAVATSTNAAQASMVAPFTGLKSAASFPVSRKQNLDITSIASNGGRVQ), are a transit peptide targeting the chloroplast.

Belongs to the RuBisCO small chain family. As to quaternary structure, heterohexadecamer of 8 large and 8 small subunits.

It is found in the plastid. The protein localises to the chloroplast. RuBisCO catalyzes two reactions: the carboxylation of D-ribulose 1,5-bisphosphate, the primary event in carbon dioxide fixation, as well as the oxidative fragmentation of the pentose substrate. Both reactions occur simultaneously and in competition at the same active site. Although the small subunit is not catalytic it is essential for maximal activity. The polypeptide is Ribulose bisphosphate carboxylase small subunit, chloroplastic 2 (Petunia hybrida (Petunia)).